Consider the following 62-residue polypeptide: Photosystem II reaction center protein Z (62 aa).

The next 2 membrane-spanning stretches (helical) occupy residues 8 to 28 and 41 to 61; these read TLLA…VLLA and FSGS…NSFV.

Belongs to the PsbZ family. PSII is composed of 1 copy each of membrane proteins PsbA, PsbB, PsbC, PsbD, PsbE, PsbF, PsbH, PsbI, PsbJ, PsbK, PsbL, PsbM, PsbT, PsbY, PsbZ, Psb30/Ycf12, at least 3 peripheral proteins of the oxygen-evolving complex and a large number of cofactors. It forms dimeric complexes.

The protein localises to the plastid. It is found in the chloroplast thylakoid membrane. Functionally, may control the interaction of photosystem II (PSII) cores with the light-harvesting antenna, regulates electron flow through the 2 photosystem reaction centers. PSII is a light-driven water plastoquinone oxidoreductase, using light energy to abstract electrons from H(2)O, generating a proton gradient subsequently used for ATP formation. This chain is Photosystem II reaction center protein Z, found in Ostreococcus tauri.